Here is a 208-residue protein sequence, read N- to C-terminus: Large ribosomal subunit protein uL4 (208 aa).

Residues A47–R58 show a composition bias toward basic and acidic residues. A disordered region spans residues A47–G84.

This sequence belongs to the universal ribosomal protein uL4 family. In terms of assembly, part of the 50S ribosomal subunit.

Its function is as follows. One of the primary rRNA binding proteins, this protein initially binds near the 5'-end of the 23S rRNA. It is important during the early stages of 50S assembly. It makes multiple contacts with different domains of the 23S rRNA in the assembled 50S subunit and ribosome. Forms part of the polypeptide exit tunnel. The protein is Large ribosomal subunit protein uL4 of Sphingopyxis alaskensis (strain DSM 13593 / LMG 18877 / RB2256) (Sphingomonas alaskensis).